Here is a 583-residue protein sequence, read N- to C-terminus: Vivapain-1 (583 aa).

The Cytoplasmic portion of the chain corresponds to 1–34 (MAQDIKIMNLTKSSLEALNRNQMLSKKSSRKILK). A propeptide spans 1-338 (MAQDIKIMNL…SSSGANLLAD (338 aa)) (activation peptide). A helical; Signal-anchor for type II membrane protein transmembrane segment spans residues 35–55 (ICMYAILTFAMCGVVLICLTA). At 56 to 583 (MSNSDGSLTQ…IGVEVFYPIL (528 aa)) the chain is on the lumenal side. Residues 62-82 (SLTQSGSHNQSGSLKGLSSTP) are compositionally biased toward polar residues. 2 disordered regions span residues 62–83 (SLTQ…STPG) and 104–125 (PHGN…ALPN). Asn-70 carries N-linked (GlcNAc...) asparagine glycosylation. Positions 106–119 (GNRDPTGDDVEKPA) are enriched in basic and acidic residues. Residues Asn-195 and Asn-272 are each glycosylated (N-linked (GlcNAc...) asparagine). 3 disulfides stabilise this stretch: Cys-360–Cys-402, Cys-395–Cys-435, and Cys-420–Cys-440. Cys-363 is an active-site residue. Asn-381 carries an N-linked (GlcNAc...) asparagine glycan. 2 N-linked (GlcNAc...) asparagine glycosylation sites follow: Asn-486 and Asn-494. Cysteines 489 and 572 form a disulfide. Residues His-495 and Asn-547 contribute to the active site.

Belongs to the peptidase C1 family.

It is found in the membrane. Functionally, cysteine protease. The chain is Vivapain-1 from Plasmodium vivax (strain Salvador I).